Here is a 558-residue protein sequence, read N- to C-terminus: Atlastin-1 (558 aa).

A disordered region spans residues 1-27; that stretch reads MAKNRRDRNSWGGFSEKTYEWSSEEEE. Residues 1–34 are N-terminal hypervariable region (HVR); it reads MAKNRRDRNSWGGFSEKTYEWSSEEEEPVKKAGP. Over 1 to 449 the chain is Cytoplasmic; sequence MAKNRRDRNS…NIFHAARTPA (449 aa). A phosphoserine mark is found at Ser10, Ser22, and Ser23. In terms of domain architecture, GB1/RHD3-type G spans 64-309; that stretch reads DKEVVAVSVA…LIPWLLSPES (246 aa). GDP contacts are provided by Arg77, Lys78, Gly79, Lys80, Ser81, Phe82, Gln148, Arg217, Asp218, Val276, and Asn279. GTP is bound by residues Arg77, Lys78, Gly79, Lys80, Ser81, and Phe82. A Mg(2+)-binding site is contributed by Ser81. Residues Arg217, Asp218, and Val276 each contribute to the GTP site. The 3HB (three-helix bundle) domain stretch occupies residues 347–438; that stretch reads MLQATAEANN…YIQYIKHNDS (92 aa). Lys395 carries the post-translational modification N6-acetyllysine. A coiled-coil region spans residues 412-439; the sequence is EFSRRYLQQLESEIDELYIQYIKHNDSK. The tract at residues 439–447 is linker; the sequence is KNIFHAART. The chain crosses the membrane as a helical span at residues 450–470; it reads TLFVVIFITYVIAGVTGFIGL. Residue Asp471 is a topological domain, lumenal. The chain crosses the membrane as a helical span at residues 472 to 492; sequence IIASLCNMIMGLTLITLCTWA. Topologically, residues 493–558 are cytoplasmic; that stretch reads YIRYSGEYRE…STEQSEKKKM (66 aa). The interval 521 to 558 is autoinhibitory domain; that stretch reads NEALYKLYSAAATHRHLYHQAFPTPKSESTEQSEKKKM.

Belongs to the TRAFAC class dynamin-like GTPase superfamily. GB1/RHD3 GTPase family. GB1 subfamily. In terms of assembly, monomeric and homodimeric. The homodimer, transiently formed by two molecules on opposing membranes, is the active form mediating ER membrane fusion. Interacts with REEP1, REEP5, RTN3 and RTN4 (via the transmembrane region); these proteins are involved in endoplasmic reticulum tubular network organization. Interacts with ZFYVE27; both proteins are involved in endoplasmic reticulum tubular network organization. Interacts with ARL6IP1; both proteins are involved in endoplasmic reticulum tubular network organization. Interacts with SPAST; the interaction is direct, could recruit SPAST to Golgi membranes. Interacts (via N-terminal region) with MAP4K4 (via CNH regulatory domain). May interact with TMED2. Interacts with CPT1C. In terms of processing, phosphorylated. Phosphorylation, by different kinases, of the N-terminal hypervariable region (HVR) regulates the ATL1-mediated membrane tethering step.

The protein resides in the endoplasmic reticulum membrane. It localises to the golgi apparatus membrane. Its subcellular location is the cell projection. It is found in the axon. It catalyses the reaction GTP + H2O = GDP + phosphate + H(+). In terms of biological role, atlastin-1 (ATL1) is a membrane-anchored GTPase that mediates the GTP-dependent fusion of endoplasmic reticulum (ER) membranes, maintaining the continuous ER network. It facilitates the formation of three-way junctions where ER tubules intersect. Two atlastin-1 on neighboring ER tubules bind GTP and form loose homodimers through the GB1/RHD3-type G domains and 3HB regions. Upon GTP hydrolysis, the 3HB regions tighten, pulling the membranes together to drive their fusion. After fusion, the homodimer disassembles upon release of inorganic phosphate (Pi). Subsequently, GDP dissociates, resetting the monomers to a conformation ready for a new fusion cycle. May also regulate more or less directly Golgi biogenesis. Indirectly regulates axonal development. This is Atlastin-1 from Macaca fascicularis (Crab-eating macaque).